The sequence spans 643 residues: Sodium/iodide cotransporter (643 aa).

At Met1 to Ala14 the chain is on the extracellular side. A helical membrane pass occupies residues Trp15–Gly31. Residues Leu32–Ala56 are Cytoplasmic-facing. A discontinuously helical transmembrane segment spans residues Leu57–Ala80. 3 residues coordinate Na(+): Ser69, Val71, and Gln72. Val76 lines the iodide pocket. Over Tyr81–Gly84 the chain is Extracellular. A helical transmembrane segment spans residues Leu85–Phe105. Met90 serves as a coordination point for iodide. The Cytoplasmic portion of the chain corresponds to Met106–Arg130. A helical transmembrane segment spans residues Leu131–Asn157. Tyr144 contacts Na(+). Residues Gln158–Asp163 lie on the Extracellular side of the membrane. A helical transmembrane segment spans residues Ile164–Val181. Over Gly182–Trp189 the chain is Cytoplasmic. The chain crosses the membrane as a helical span at residues Thr190–Arg208. Topologically, residues Gly209–Thr243 are extracellular. A discontinuously helical transmembrane segment spans residues Phe244–Val266. Trp255 serves as a coordination point for iodide. Met258 contributes to the Na(+) binding site. At Gln267–Ala278 the chain is on the cytoplasmic side. A helical membrane pass occupies residues Lys279–Ile301. Residues Val302–Asp335 are Extracellular-facing. Residues Leu336–Ala363 traverse the membrane as a helical segment. The Cytoplasmic portion of the chain corresponds to Ala364–Ile386. Residues Ser387–Leu408 form a helical membrane-spanning segment. The Extracellular segment spans residues Gly409 to Gly411. The chain crosses the membrane as a helical span at residues Val412–Leu437. Leu413 serves as a coordination point for iodide. Residues Ser416 and Phe417 each contribute to the Na(+) site. Residue Phe417 participates in iodide binding. At Pro438–Asn441 the chain is on the cytoplasmic side. Residues Thr442–Leu465 form a helical membrane-spanning segment. At Tyr466–Ala525 the chain is on the extracellular side. 2 N-linked (GlcNAc...) asparagine glycosylation sites follow: Asn489 and Asn502. Residues Ile526 to Thr550 traverse the membrane as a helical segment. The Cytoplasmic portion of the chain corresponds to Gly551–Leu643. Position 556 is a phosphoserine; by PKA (Ser556). Residues Ala623–Leu643 are disordered. Positions Asp633 to Leu643 are enriched in basic and acidic residues.

It belongs to the sodium:solute symporter (SSF) (TC 2.A.21) family. Monomer. Glycosylated. Expression is primarily in thyroid tissue, but also to a lower extent in mammary gland and ovary. Expression is reduced in tumors.

The protein resides in the cell membrane. The protein localises to the cytoplasm. The catalysed reaction is iodide(out) + 2 Na(+)(out) = iodide(in) + 2 Na(+)(in). It catalyses the reaction chlorate(out) + 2 Na(+)(out) = chlorate(in) + 2 Na(+)(in). It carries out the reaction thiocyanate(out) + 2 Na(+)(out) = thiocyanate(in) + 2 Na(+)(in). The enzyme catalyses nitrate(out) + 2 Na(+)(out) = nitrate(in) + 2 Na(+)(in). The catalysed reaction is selenocyanate(out) + 2 Na(+)(out) = selenocyanate(in) + 2 Na(+)(in). Its activity is regulated as follows. Dysidenin and perchlorate inhibit iodide transport activity. Oxyanions inhibit iodide transport activity by blocking the binding sites for iodide and one of the sodium ions. In terms of biological role, sodium:iodide symporter that mediates the transport of iodide into the thyroid gland. Can also mediate the transport of chlorate, thiocynate, nitrate and selenocynate. The polypeptide is Sodium/iodide cotransporter (SLC5A5) (Homo sapiens (Human)).